A 276-amino-acid polypeptide reads, in one-letter code: 3-methyl-2-oxobutanoate hydroxymethyltransferase (276 aa).

The Mg(2+) site is built by D44 and D83. 3-methyl-2-oxobutanoate contacts are provided by residues 44–45 (DS), D83, and K113. Residue E115 coordinates Mg(2+). The Proton acceptor role is filled by E182.

The protein belongs to the PanB family. As to quaternary structure, homodecamer; pentamer of dimers. Mg(2+) serves as cofactor.

The protein resides in the cytoplasm. It catalyses the reaction 3-methyl-2-oxobutanoate + (6R)-5,10-methylene-5,6,7,8-tetrahydrofolate + H2O = 2-dehydropantoate + (6S)-5,6,7,8-tetrahydrofolate. It participates in cofactor biosynthesis; (R)-pantothenate biosynthesis; (R)-pantoate from 3-methyl-2-oxobutanoate: step 1/2. Catalyzes the reversible reaction in which hydroxymethyl group from 5,10-methylenetetrahydrofolate is transferred onto alpha-ketoisovalerate to form ketopantoate. The chain is 3-methyl-2-oxobutanoate hydroxymethyltransferase from Clostridium acetobutylicum (strain ATCC 824 / DSM 792 / JCM 1419 / IAM 19013 / LMG 5710 / NBRC 13948 / NRRL B-527 / VKM B-1787 / 2291 / W).